A 264-amino-acid polypeptide reads, in one-letter code: Undecaprenyl-diphosphatase (264 aa).

A run of 7 helical transmembrane segments spans residues 34-54, 75-95, 104-124, 137-157, 180-200, 207-227, and 243-263; these read LLNLPIAIAYSFGLFMEMGSI, LLYLAIITIITGLVGVPLYII, YDPSIPMIILGIALIVDGLYI, LSLKNIILIGIAQGLAALPGV, YSYLAYIPAAVGAVGTTILFS, VISLIGIGGVLISVISAFIIG, and IYIIDFTLGGIAIVVSVLTIL.

The protein belongs to the UppP family.

It is found in the cell membrane. The catalysed reaction is di-trans,octa-cis-undecaprenyl diphosphate + H2O = di-trans,octa-cis-undecaprenyl phosphate + phosphate + H(+). Catalyzes the dephosphorylation of undecaprenyl diphosphate (UPP). In Sulfurisphaera tokodaii (strain DSM 16993 / JCM 10545 / NBRC 100140 / 7) (Sulfolobus tokodaii), this protein is Undecaprenyl-diphosphatase.